We begin with the raw amino-acid sequence, 151 residues long: Ribosome maturation factor RimP (151 aa).

The protein belongs to the RimP family.

Its subcellular location is the cytoplasm. Its function is as follows. Required for maturation of 30S ribosomal subunits. This is Ribosome maturation factor RimP from Crocosphaera subtropica (strain ATCC 51142 / BH68) (Cyanothece sp. (strain ATCC 51142)).